The sequence spans 92 residues: Small ribosomal subunit protein uS19 (92 aa).

The protein belongs to the universal ribosomal protein uS19 family.

Its function is as follows. Protein S19 forms a complex with S13 that binds strongly to the 16S ribosomal RNA. The protein is Small ribosomal subunit protein uS19 of Corynebacterium kroppenstedtii (strain DSM 44385 / JCM 11950 / CIP 105744 / CCUG 35717).